Here is a 144-residue protein sequence, read N- to C-terminus: 3-dehydroquinate dehydratase (144 aa).

Residue Y24 is the Proton acceptor of the active site. Residues N76, H82, and D89 each coordinate substrate. Catalysis depends on H102, which acts as the Proton donor. Residues 103 to 104 and R113 each bind substrate; that span reads LS.

This sequence belongs to the type-II 3-dehydroquinase family. Homododecamer.

It carries out the reaction 3-dehydroquinate = 3-dehydroshikimate + H2O. Its pathway is metabolic intermediate biosynthesis; chorismate biosynthesis; chorismate from D-erythrose 4-phosphate and phosphoenolpyruvate: step 3/7. Its function is as follows. Catalyzes a trans-dehydration via an enolate intermediate. The chain is 3-dehydroquinate dehydratase from Bordetella petrii (strain ATCC BAA-461 / DSM 12804 / CCUG 43448).